The chain runs to 405 residues: Cysteine desulfurase IscS (405 aa).

Pyridoxal 5'-phosphate-binding positions include 75-76 (AT), N156, Q184, and 204-206 (SAH). K207 carries the post-translational modification N6-(pyridoxal phosphate)lysine. T244 provides a ligand contact to pyridoxal 5'-phosphate. The active-site Cysteine persulfide intermediate is the C329. C329 is a [2Fe-2S] cluster binding site.

It belongs to the class-V pyridoxal-phosphate-dependent aminotransferase family. NifS/IscS subfamily. In terms of assembly, homodimer. Forms a heterotetramer with IscU, interacts with other sulfur acceptors. Pyridoxal 5'-phosphate serves as cofactor.

It localises to the cytoplasm. It carries out the reaction (sulfur carrier)-H + L-cysteine = (sulfur carrier)-SH + L-alanine. The protein operates within cofactor biosynthesis; iron-sulfur cluster biosynthesis. Master enzyme that delivers sulfur to a number of partners involved in Fe-S cluster assembly, tRNA modification or cofactor biosynthesis. Catalyzes the removal of elemental sulfur atoms from cysteine to produce alanine. Functions as a sulfur delivery protein for Fe-S cluster synthesis onto IscU, an Fe-S scaffold assembly protein, as well as other S acceptor proteins. In Methylobacillus flagellatus (strain ATCC 51484 / DSM 6875 / VKM B-1610 / KT), this protein is Cysteine desulfurase IscS.